We begin with the raw amino-acid sequence, 481 residues long: MTMRRLMTWLFGAFLLLLREDAFALGLLDGYHLALENDPQFQAAIQEHEAGRQYRALGRAALLPRLVYSYNRGRSWSDVTQTTTRGDFKEDRDYDSYVSTLSLQQPLFDYEAFSRYRKGVAQALLSDERFRSQSQELLVRVLEAYTGALLAQDQIELARAQKRSYREQFQLNQRQFERGNGTRTDTLETQARFNLAQAQEIEARDSQDAALRELERLVGAPLEIADLAPLGERFQVRPLSPASYTAWRDLALAENPELASLRHAVDVARYEVEQNRADFLPRLGLYASTGKSKSGSENTYNQRYETDSVGIQLSVPLFSGGETLAATRQATHRMEKSHYDLDDKVRETLNQVRKMYNQSSSSAAKIRAYEMTVDSARTLVMATRKSIAAGVRVNLDLLNAEQALYSAMNELSKAKYDYLTAWARLRFYAGVLDEADLELVAANFVSGETPARRRDCATTDCPAPLHTLSKTDTEENRSALN.

Positions Pro462–Asn481 are disordered. Basic and acidic residues predominate over residues Ser469 to Asn481.

It belongs to the outer membrane factor (OMF) (TC 1.B.17) family.

Its subcellular location is the cell outer membrane. In terms of biological role, involved in the secretion of alkaline protease. This Pseudomonas aeruginosa (strain ATCC 15692 / DSM 22644 / CIP 104116 / JCM 14847 / LMG 12228 / 1C / PRS 101 / PAO1) protein is Alkaline protease secretion protein AprF (aprF).